Consider the following 421-residue polypeptide: Histidine--tRNA ligase (421 aa).

The protein belongs to the class-II aminoacyl-tRNA synthetase family. As to quaternary structure, homodimer.

The protein resides in the cytoplasm. The catalysed reaction is tRNA(His) + L-histidine + ATP = L-histidyl-tRNA(His) + AMP + diphosphate + H(+). The protein is Histidine--tRNA ligase of Caldicellulosiruptor bescii (strain ATCC BAA-1888 / DSM 6725 / KCTC 15123 / Z-1320) (Anaerocellum thermophilum).